We begin with the raw amino-acid sequence, 270 residues long: Tryptophan synthase alpha chain (270 aa).

Active-site proton acceptor residues include Glu-49 and Asp-60.

The protein belongs to the TrpA family. Tetramer of two alpha and two beta chains.

The catalysed reaction is (1S,2R)-1-C-(indol-3-yl)glycerol 3-phosphate + L-serine = D-glyceraldehyde 3-phosphate + L-tryptophan + H2O. The protein operates within amino-acid biosynthesis; L-tryptophan biosynthesis; L-tryptophan from chorismate: step 5/5. In terms of biological role, the alpha subunit is responsible for the aldol cleavage of indoleglycerol phosphate to indole and glyceraldehyde 3-phosphate. This is Tryptophan synthase alpha chain from Buchnera aphidicola subsp. Melaphis rhois.